Reading from the N-terminus, the 361-residue chain is Cyclin-dependent kinase 10 (361 aa).

In terms of domain architecture, Protein kinase spans 37 to 321; sequence FEKLNRIGEG…AGDCLESSYF (285 aa). Residues 43-51 and lysine 66 contribute to the ATP site; that span reads IGEGTYGIV. The Proton acceptor role is filled by aspartate 161. Threonine 194 is subject to Phosphothreonine. Residues 332 to 361 are disordered; it reads LMPTFPHHRNKRATPATSLGTESQSRRGRP.

Belongs to the protein kinase superfamily. CMGC Ser/Thr protein kinase family. CDC2/CDKX subfamily. Heterodimer with CCNQ, the interaction is required for kinase activity. Interacts with ETS2. Interacts with PRK2.

It localises to the cytoplasm. The protein resides in the cytoskeleton. The protein localises to the cilium basal body. The catalysed reaction is L-seryl-[protein] + ATP = O-phospho-L-seryl-[protein] + ADP + H(+). It catalyses the reaction L-threonyl-[protein] + ATP = O-phospho-L-threonyl-[protein] + ADP + H(+). Cyclin-dependent kinase that phosphorylates the transcription factor ETS2 (in vitro) and positively controls its proteasomal degradation (in cells). Involved in the regulation of actin cytoskeleton organization through the phosphorylation of actin dynamics regulators such as PKN2. Is a negative regulator of ciliogenesis through phosphorylation of PKN2 and promotion of RhoA signaling. The sequence is that of Cyclin-dependent kinase 10 (CDK10) from Bos taurus (Bovine).